We begin with the raw amino-acid sequence, 329 residues long: Caveolae-associated protein 4a (329 aa).

Disordered regions lie at residues 198–260 (SKEN…NIAK) and 274–329 (KERT…IHED). Residues 198 to 262 (SKENMNKTRE…RLKENIAKKA (65 aa)) are a coiled coil. Positions 201–220 (NMNKTREKTRENLSKTKESL) are enriched in basic and acidic residues. Over residues 221-232 (SKTGQTLGTKFN) the composition is skewed to polar residues. Positions 242–260 (EQREKIKQSSERLKENIAK) are enriched in basic and acidic residues. Low complexity predominate over residues 279–290 (AEGQEGAEAEPA). T292 bears the Phosphothreonine mark. Positions 310–329 (TENKREGPVSEEGATRIHED) are enriched in basic and acidic residues.

The protein belongs to the CAVIN family.

Its subcellular location is the cytoplasm. The protein resides in the myofibril. It is found in the sarcomere. The protein localises to the membrane. It localises to the caveola. In terms of biological role, induces rhoa activation and activates nppa transcription and myofibrillar organization through the rho/rock signaling pathway. In Danio rerio (Zebrafish), this protein is Caveolae-associated protein 4a (cavin4a).